The sequence spans 346 residues: Phosphoribosylformylglycinamidine cyclo-ligase (346 aa).

Belongs to the AIR synthase family.

Its subcellular location is the cytoplasm. It catalyses the reaction 2-formamido-N(1)-(5-O-phospho-beta-D-ribosyl)acetamidine + ATP = 5-amino-1-(5-phospho-beta-D-ribosyl)imidazole + ADP + phosphate + H(+). Its pathway is purine metabolism; IMP biosynthesis via de novo pathway; 5-amino-1-(5-phospho-D-ribosyl)imidazole from N(2)-formyl-N(1)-(5-phospho-D-ribosyl)glycinamide: step 2/2. This is Phosphoribosylformylglycinamidine cyclo-ligase from Proteus mirabilis (strain HI4320).